The following is a 594-amino-acid chain: Nucleolar protein 56 (594 aa).

Glycyl lysine isopeptide (Lys-Gly) (interchain with G-Cter in SUMO2) cross-links involve residues lysine 87, lysine 230, and lysine 240. Residues 292 to 410 (VAPSLSALIG…VEERLSFYET (119 aa)) enclose the Nop domain. Serine 314 is subject to Phosphoserine. Position 359 is an omega-N-methylarginine (arginine 359). 2 stretches are compositionally biased toward low complexity: residues 458–469 (ALASSENSSSTP) and 488–504 (QEVP…ISFS). A disordered region spans residues 458 to 594 (ALASSENSSS…KKFHKASQED (137 aa)). Serine 466 and serine 467 each carry phosphoserine. Residue threonine 468 is modified to Phosphothreonine. Serine 511, serine 519, serine 520, and serine 537 each carry phosphoserine. Residue lysine 540 forms a Glycyl lysine isopeptide (Lys-Gly) (interchain with G-Cter in SUMO2) linkage. Lysine 561 bears the N6-acetyllysine mark. Serine 563 is modified (phosphoserine). Lysine 564 is covalently cross-linked (Glycyl lysine isopeptide (Lys-Gly) (interchain with G-Cter in SUMO2)). 4 positions are modified to phosphoserine: serine 569, serine 570, serine 579, and serine 581. Over residues 580–594 (SSKKKKKFHKASQED) the composition is skewed to basic residues.

It belongs to the NOP5/NOP56 family. As to quaternary structure, part of a large pre-ribosomal ribonucleoprotein (RNP) complex, that consists of at least 62 ribosomal proteins, 45 nonribosomal proteins and both pre-rRNA and mature rRNA species. Within this complex directly interacts with TCOF1 in an RNA-independent manner. Core component of box C/D small nucleolar ribonucleoprotein (snoRNP) particles; the core proteins SNU13, NOP56, NOP58 and FBL or FBLL1 assemble stepwise onto the snoRNA. Interacts with NOP1 and NOP58. Interacts with NUFIP1, RUVBL1 and RUVBL2; RUVBL1:RUVBL2 seem to bridge the association of NOP56 with NUFIP1. Part of the small subunit (SSU) processome, composed of more than 70 proteins and the RNA chaperone small nucleolar RNA (snoRNA) U3. Interacts with NOP2 and FBL.

It localises to the nucleus. It is found in the nucleolus. The protein resides in the cytoplasm. The protein localises to the nucleoplasm. Involved in the early to middle stages of 60S ribosomal subunit biogenesis. Required for the biogenesis of box C/D snoRNAs such U3, U8 and U14 snoRNAs. Part of the small subunit (SSU) processome, first precursor of the small eukaryotic ribosomal subunit. During the assembly of the SSU processome in the nucleolus, many ribosome biogenesis factors, an RNA chaperone and ribosomal proteins associate with the nascent pre-rRNA and work in concert to generate RNA folding, modifications, rearrangements and cleavage as well as targeted degradation of pre-ribosomal RNA by the RNA exosome. Core component of box C/D small nucleolar ribonucleoprotein (snoRNP) complexes that function in methylation of multiple sites on ribosomal RNAs (rRNAs) and messenger RNAs (mRNAs). The polypeptide is Nucleolar protein 56 (Homo sapiens (Human)).